An 846-amino-acid chain; its full sequence is Disks large-associated protein 5 (846 aa).

Serine 67 bears the Phosphoserine; by CDK1 mark. The stretch at 90–120 (RKQMLQKYKEEKQLQKLKEQREKAKRGIFKV) forms a coiled coil. Positions 153 to 284 (TRSKAKDQME…TNATSGMNPD (132 aa)) are disordered. 2 stretches are compositionally biased toward basic and acidic residues: residues 156 to 174 (KAKD…DVRA) and 182 to 194 (TSEK…EKKV). Serine 202 is subject to Phosphoserine. Residues 203 to 225 (LRMTRSATQAAKQVPRTVSSTTA) are compositionally biased toward polar residues. The segment covering 250–266 (KNVETKPDKGISCKVDS) has biased composition (basic and acidic residues). The segment covering 269–281 (NTLNSQTNATSGM) has biased composition (polar residues). Threonine 326 carries the phosphothreonine modification. Threonine 329 carries the phosphothreonine; by CDK1 modification. Threonine 338 carries the phosphothreonine modification. A Glycyl lysine isopeptide (Lys-Gly) (interchain with G-Cter in SUMO2) cross-link involves residue lysine 347. Threonine 401 and threonine 402 each carry phosphothreonine; by CDK1. Serine 618 is modified (phosphoserine; by CDK1). Serine 627 carries the phosphoserine; by AURKA modification. Polar residues predominate over residues 628–671 (VSSEGPSQRLGTPKSVNKAVSQSRNEMGIPQQTTSPENAGPQNT). The interval 628–674 (VSSEGPSQRLGTPKSVNKAVSQSRNEMGIPQQTTSPENAGPQNTKSE) is disordered. A phosphoserine mark is found at serine 629 and serine 634. Phosphothreonine; by CDK1 is present on threonine 639. The residue at position 642 (serine 642) is a Phosphoserine; by CDK1. Phosphoserine is present on serine 662. Residues serine 725 and serine 757 each carry the phosphoserine; by AURKA modification. A Phosphothreonine; by CDK1 modification is found at threonine 759. Residues serine 774 and serine 777 each carry the phosphoserine modification. Residue threonine 784 is modified to Phosphothreonine. Residues serine 806 and serine 812 each carry the phosphoserine modification. Position 830 is a phosphoserine; by AURKA (serine 830). Serine 839 carries the phosphoserine; by CDK1 modification.

The protein belongs to the SAPAP family. Interacts with CDK1. Interacts with the C-terminal proline-rich region of FBXO7. Recruited by FBXO7 to a SCF (SKP1-CUL1-F-box) protein complex in a CDK1/Cyclin B-phosphorylation dependent manner. Interacts with CDH1. Post-translationally, ubiquitinated, leading to its degradation. Decreased phosphorylation levels are associated with the differentiation of intestinal epithelial cells. In terms of tissue distribution, abundantly expressed in fetal liver. Expressed at lower levels in bone marrow, testis, colon, and placenta.

The protein resides in the nucleus. It localises to the cytoplasm. The protein localises to the cytoskeleton. Its subcellular location is the spindle. Its function is as follows. Potential cell cycle regulator that may play a role in carcinogenesis of cancer cells. Mitotic phosphoprotein regulated by the ubiquitin-proteasome pathway. Key regulator of adherens junction integrity and differentiation that may be involved in CDH1-mediated adhesion and signaling in epithelial cells. This chain is Disks large-associated protein 5 (DLGAP5), found in Homo sapiens (Human).